Here is a 95-residue protein sequence, read N- to C-terminus: Large ribosomal subunit protein bL25 (95 aa).

Belongs to the bacterial ribosomal protein bL25 family. Part of the 50S ribosomal subunit; part of the 5S rRNA/L5/L18/L25 subcomplex. Contacts the 5S rRNA. Binds to the 5S rRNA independently of L5 and L18.

In terms of biological role, this is one of the proteins that binds to the 5S RNA in the ribosome where it forms part of the central protuberance. The protein is Large ribosomal subunit protein bL25 of Shewanella sediminis (strain HAW-EB3).